Here is a 498-residue protein sequence, read N- to C-terminus: Glycerol kinase (498 aa).

Residue Thr12 coordinates ADP. 3 residues coordinate ATP: Thr12, Thr13, and Ser14. Thr12 is a binding site for sn-glycerol 3-phosphate. Arg16 serves as a coordination point for ADP. Residues Arg82, Glu83, Tyr134, and Asp243 each coordinate sn-glycerol 3-phosphate. Positions 82, 83, 134, 243, and 244 each coordinate glycerol. Positions 265 and 308 each coordinate ADP. Residues Thr265, Gly308, Gln312, and Gly411 each coordinate ATP. Gly411 contacts ADP.

Belongs to the FGGY kinase family.

The catalysed reaction is glycerol + ATP = sn-glycerol 3-phosphate + ADP + H(+). It functions in the pathway polyol metabolism; glycerol degradation via glycerol kinase pathway; sn-glycerol 3-phosphate from glycerol: step 1/1. Its activity is regulated as follows. Inhibited by fructose 1,6-bisphosphate (FBP). Its function is as follows. Key enzyme in the regulation of glycerol uptake and metabolism. Catalyzes the phosphorylation of glycerol to yield sn-glycerol 3-phosphate. The protein is Glycerol kinase of Brucella suis biovar 1 (strain 1330).